A 313-amino-acid chain; its full sequence is Inner membrane ABC transporter permease protein YdcU (313 aa).

At 1–25 the chain is on the cytoplasmic side; that stretch reads MAMNVLQSPSRPGLGKVSGFFWHNP. A helical membrane pass occupies residues 26 to 46; it reads GLGLFLLLLGPLMWFGIVYFG. Over 47–92 the chain is Periplasmic; that stretch reads SLLTLLWQGFYTFDDFTMSVTPELTLANIRALFNPANYDIILRTLT. An ABC transmembrane type-1 domain is found at 87 to 302; it reads ILRTLTMAVA…PIILIALYLA (216 aa). Residues 93–113 traverse the membrane as a helical segment; sequence MAVAVTIASAILAFPMAWYMA. Residues 114-122 lie on the Cytoplasmic side of the membrane; it reads RYTSGKMKA. A helical membrane pass occupies residues 123–143; it reads FFYIAVMLPMWASYIVKAYAW. Residues 144–154 are Periplasmic-facing; it reads TLLLAKDGVAQ. A helical membrane pass occupies residues 155–175; sequence WFLQHLGLEPLLTAFLTLPAV. Topologically, residues 176–187 are cytoplasmic; it reads GGNTLSTSGLGR. The chain crosses the membrane as a helical span at residues 188 to 208; that stretch reads FLVFLYIWLPFMILPVQAALE. The Periplasmic portion of the chain corresponds to 209–230; that stretch reads RLPPSLLQASADLGARPRQTFR. Residues 231-251 form a helical membrane-spanning segment; the sequence is YVVLPLAIPGIAAGSIFTFSL. Thr-252 is a topological domain (cytoplasmic). The chain crosses the membrane as a helical span at residues 253–273; sequence LGDFIVPQLVGPPGYFIGNMV. At 274–283 the chain is on the periplasmic side; the sequence is YSQQGAIGNM. A helical transmembrane segment spans residues 284 to 304; that stretch reads PMAAAFTLVPIILIALYLAFV. The Cytoplasmic segment spans residues 305-313; the sequence is KRLGAFDAL.

Belongs to the binding-protein-dependent transport system permease family. CysTW subfamily.

The protein resides in the cell inner membrane. In terms of biological role, probably part of the ABC transporter complex YdcSTUV. Probably responsible for the translocation of the substrate across the membrane. The chain is Inner membrane ABC transporter permease protein YdcU (ydcU) from Escherichia coli (strain K12).